A 285-amino-acid polypeptide reads, in one-letter code: Acetyl-coenzyme A carboxylase carboxyl transferase subunit beta (285 aa).

A CoA carboxyltransferase N-terminal domain is found at 29 to 285; the sequence is IMTKCPKCKK…ILKIHQEVTK (257 aa). Residues Cys-33, Cys-36, Cys-52, and Cys-55 each contribute to the Zn(2+) site. A C4-type zinc finger spans residues 33–55; it reads CPKCKKIMYTKELAENLNVCFNC.

This sequence belongs to the AccD/PCCB family. Acetyl-CoA carboxylase is a heterohexamer composed of biotin carboxyl carrier protein (AccB), biotin carboxylase (AccC) and two subunits each of ACCase subunit alpha (AccA) and ACCase subunit beta (AccD). It depends on Zn(2+) as a cofactor.

Its subcellular location is the cytoplasm. It catalyses the reaction N(6)-carboxybiotinyl-L-lysyl-[protein] + acetyl-CoA = N(6)-biotinyl-L-lysyl-[protein] + malonyl-CoA. It functions in the pathway lipid metabolism; malonyl-CoA biosynthesis; malonyl-CoA from acetyl-CoA: step 1/1. Component of the acetyl coenzyme A carboxylase (ACC) complex. Biotin carboxylase (BC) catalyzes the carboxylation of biotin on its carrier protein (BCCP) and then the CO(2) group is transferred by the transcarboxylase to acetyl-CoA to form malonyl-CoA. This Staphylococcus aureus (strain Mu3 / ATCC 700698) protein is Acetyl-coenzyme A carboxylase carboxyl transferase subunit beta.